Here is a 208-residue protein sequence, read N- to C-terminus: Small ribosomal subunit protein eS8 (208 aa).

The segment at 1–40 (MGISRDNWHKRRKTGGKRKPVHKKRKYELGRPPSNTKLGP) is disordered. Basic residues predominate over residues 8–26 (WHKRRKTGGKRKPVHKKRK).

It belongs to the eukaryotic ribosomal protein eS8 family. Component of the small ribosomal subunit.

It localises to the cytoplasm. In terms of biological role, component of the small ribosomal subunit. The ribosome is a large ribonucleoprotein complex responsible for the synthesis of proteins in the cell. This Ictalurus punctatus (Channel catfish) protein is Small ribosomal subunit protein eS8 (rps8).